The chain runs to 169 residues: Large ribosomal subunit protein bL17 (169 aa).

Residues Glu124–Ala169 are disordered. The segment covering Asp131–Lys140 has biased composition (basic residues). Residues Asp150–Pro161 are compositionally biased toward low complexity.

Belongs to the bacterial ribosomal protein bL17 family. In terms of assembly, part of the 50S ribosomal subunit. Contacts protein L32.

This chain is Large ribosomal subunit protein bL17, found in Chloroherpeton thalassium (strain ATCC 35110 / GB-78).